The sequence spans 160 residues: Putative pre-16S rRNA nuclease (160 aa).

This sequence belongs to the YqgF nuclease family.

It localises to the cytoplasm. Its function is as follows. Could be a nuclease involved in processing of the 5'-end of pre-16S rRNA. This is Putative pre-16S rRNA nuclease from Cereibacter sphaeroides (strain ATCC 17029 / ATH 2.4.9) (Rhodobacter sphaeroides).